Here is a 1040-residue protein sequence, read N- to C-terminus: Multidrug resistance protein MdtB (1040 aa).

Transmembrane regions (helical) follow at residues Leu-25 to Ala-45, Leu-347 to Ala-367, Ile-369 to Leu-389, Leu-396 to Ile-416, Ile-440 to Phe-460, Phe-472 to Pro-492, Trp-537 to Ile-557, Leu-863 to Val-883, Phe-888 to Ala-908, Ile-910 to Ile-930, Ile-968 to Val-988, and Ile-998 to Ile-1018.

The protein belongs to the resistance-nodulation-cell division (RND) (TC 2.A.6) family. MdtB subfamily. As to quaternary structure, part of a tripartite efflux system composed of MdtA, MdtB and MdtC. MdtB forms a heteromultimer with MdtC.

Its subcellular location is the cell inner membrane. This is Multidrug resistance protein MdtB from Salmonella paratyphi B (strain ATCC BAA-1250 / SPB7).